Here is a 181-residue protein sequence, read N- to C-terminus: ATP synthase subunit b (181 aa).

The helical transmembrane segment at 24-44 threads the bilayer; sequence LFPNLPNFIAHLLATIILVIV.

The protein belongs to the ATPase B chain family. F-type ATPases have 2 components, F(1) - the catalytic core - and F(0) - the membrane proton channel. F(1) has five subunits: alpha(3), beta(3), gamma(1), delta(1), epsilon(1). F(0) has three main subunits: a(1), b(2) and c(10-14). The alpha and beta chains form an alternating ring which encloses part of the gamma chain. F(1) is attached to F(0) by a central stalk formed by the gamma and epsilon chains, while a peripheral stalk is formed by the delta and b chains.

Its subcellular location is the cell membrane. Its function is as follows. F(1)F(0) ATP synthase produces ATP from ADP in the presence of a proton or sodium gradient. F-type ATPases consist of two structural domains, F(1) containing the extramembraneous catalytic core and F(0) containing the membrane proton channel, linked together by a central stalk and a peripheral stalk. During catalysis, ATP synthesis in the catalytic domain of F(1) is coupled via a rotary mechanism of the central stalk subunits to proton translocation. In terms of biological role, component of the F(0) channel, it forms part of the peripheral stalk, linking F(1) to F(0). The polypeptide is ATP synthase subunit b (Mycoplasma mycoides subsp. mycoides SC (strain CCUG 32753 / NCTC 10114 / PG1)).